The chain runs to 180 residues: Large ribosomal subunit protein uL6 (180 aa).

It belongs to the universal ribosomal protein uL6 family. As to quaternary structure, part of the 50S ribosomal subunit.

In terms of biological role, this protein binds to the 23S rRNA, and is important in its secondary structure. It is located near the subunit interface in the base of the L7/L12 stalk, and near the tRNA binding site of the peptidyltransferase center. The protein is Large ribosomal subunit protein uL6 of Thermus thermophilus (strain ATCC BAA-163 / DSM 7039 / HB27).